The following is a 246-amino-acid chain: Acetoacetyl-CoA reductase (246 aa).

NADP(+) contacts are provided by residues 13–15, Gly-35, Arg-40, 60–62, and 88–92; these read GGI, GNV, and NAGIT. Residues Asp-94 and 147-150 contribute to the substrate site; that span reads QFGQ. Tyr-153 functions as the Proton acceptor in the catalytic mechanism. 183 to 186 is an NADP(+) binding site; the sequence is PGYI. Substrate is bound by residues 184–185 and Arg-195; that span reads GY.

Belongs to the short-chain dehydrogenases/reductases (SDR) family. As to quaternary structure, homotetramer.

The protein localises to the cytoplasm. The enzyme catalyses a (3R)-3-hydroxyacyl-CoA + NADP(+) = a 3-oxoacyl-CoA + NADPH + H(+). It carries out the reaction (3R)-3-hydroxybutanoyl-CoA + NADP(+) = acetoacetyl-CoA + NADPH + H(+). It participates in biopolymer metabolism; poly-(R)-3-hydroxybutanoate biosynthesis. Its function is as follows. Catalyzes the chiral reduction of acetoacetyl-CoA to (R)-3-hydroxybutyryl-CoA. Is involved in the biosynthesis of polyhydroxybutyrate (PHB), which is accumulated as an intracellular energy reserve material when cells grow under conditions of nutrient limitation. The sequence is that of Acetoacetyl-CoA reductase from Cupriavidus necator (strain ATCC 17699 / DSM 428 / KCTC 22496 / NCIMB 10442 / H16 / Stanier 337) (Ralstonia eutropha).